The sequence spans 396 residues: Ribosomal RNA large subunit methyltransferase I (396 aa).

The region spanning 2-81 is the PUA domain; it reads SVRLVLAKGR…ETIDIAFFTR (80 aa).

This sequence belongs to the methyltransferase superfamily. RlmI family.

It localises to the cytoplasm. The enzyme catalyses cytidine(1962) in 23S rRNA + S-adenosyl-L-methionine = 5-methylcytidine(1962) in 23S rRNA + S-adenosyl-L-homocysteine + H(+). In terms of biological role, specifically methylates the cytosine at position 1962 (m5C1962) of 23S rRNA. This Cronobacter sakazakii (strain ATCC BAA-894) (Enterobacter sakazakii) protein is Ribosomal RNA large subunit methyltransferase I.